Here is a 293-residue protein sequence, read N- to C-terminus: 4-diphosphocytidyl-2-C-methyl-D-erythritol kinase (293 aa).

Residue Lys-16 is part of the active site. 99–109 contributes to the ATP binding site; that stretch reads PMGAGLGGGSS. Asp-141 is a catalytic residue.

The protein belongs to the GHMP kinase family. IspE subfamily.

The enzyme catalyses 4-CDP-2-C-methyl-D-erythritol + ATP = 4-CDP-2-C-methyl-D-erythritol 2-phosphate + ADP + H(+). The protein operates within isoprenoid biosynthesis; isopentenyl diphosphate biosynthesis via DXP pathway; isopentenyl diphosphate from 1-deoxy-D-xylulose 5-phosphate: step 3/6. Catalyzes the phosphorylation of the position 2 hydroxy group of 4-diphosphocytidyl-2C-methyl-D-erythritol. The polypeptide is 4-diphosphocytidyl-2-C-methyl-D-erythritol kinase (Burkholderia cenocepacia (strain ATCC BAA-245 / DSM 16553 / LMG 16656 / NCTC 13227 / J2315 / CF5610) (Burkholderia cepacia (strain J2315))).